A 541-amino-acid chain; its full sequence is Beta-hexosaminidase subunit A2 (541 aa).

A signal peptide spans 1 to 21 (MINKFLTIFLIFSIVIIKVLS). Glu-314 (proton donor) is an active-site residue. N-linked (GlcNAc...) asparagine glycosylation is found at Asn-322, Asn-336, Asn-356, Asn-435, and Asn-483.

It belongs to the glycosyl hydrolase 20 family.

The protein localises to the lysosome. It catalyses the reaction Hydrolysis of terminal non-reducing N-acetyl-D-hexosamine residues in N-acetyl-beta-D-hexosaminides.. Functionally, responsible for the degradation of GM2 gangliosides, and a variety of other molecules containing terminal N-acetyl hexosamines. This is Beta-hexosaminidase subunit A2 (hexa2) from Dictyostelium discoideum (Social amoeba).